A 249-amino-acid polypeptide reads, in one-letter code: MAQAVEEWYRQMPIITRSYLTAAVVTTVGCTLEIISPYHLYLNPKLVVQHYEIWRLVTNFLYFRKMDLDFLFHMFFLARYCKLLEENSFRGRTADFFYMLLFGATVLTSIVLIGGMIPYISETFARILFLSNSLTFMMVYVWSKHNPFIHMSFLGLFTFTAAYLPWVLLGFSILVGSSTWVDLLGMIAGHVYYFLEDVYPRMTGRRPLKTPSFIKALFADDNVVVAQPPNAGIGAGARFGAMGLDPQAQ.

Residues 1 to 21 (MAQAVEEWYRQMPIITRSYLT) lie on the Cytoplasmic side of the membrane. A helical transmembrane segment spans residues 22–42 (AAVVTTVGCTLEIISPYHLYL). Topologically, residues 43–96 (NPKLVVQHYEIWRLVTNFLYFRKMDLDFLFHMFFLARYCKLLEENSFRGRTADF) are lumenal. Residues 97 to 117 (FYMLLFGATVLTSIVLIGGMI) form a helical membrane-spanning segment. The Cytoplasmic segment spans residues 118–122 (PYISE). Residues 123-143 (TFARILFLSNSLTFMMVYVWS) traverse the membrane as a helical segment. At 144–152 (KHNPFIHMS) the chain is on the lumenal side. The chain crosses the membrane as a helical span at residues 153–173 (FLGLFTFTAAYLPWVLLGFSI). Residues 174-249 (LVGSSTWVDL…GAMGLDPQAQ (76 aa)) lie on the Cytoplasmic side of the membrane.

Belongs to the derlin family. As to expression, expressed in roots, stalks, leaves, embryo and endosperm.

The protein localises to the endoplasmic reticulum membrane. In terms of biological role, may be involved in the degradation process of specific misfolded endoplasmic reticulum (ER) luminal proteins. The polypeptide is Derlin-2.1 (DER2.1) (Zea mays (Maize)).